A 204-amino-acid chain; its full sequence is MMRTLITTHPLLLLLLLQQLLQPVQFQEVDTDFDSPEDKMEEFREYLEEFRRTGPTRPPTKEKVERRVIIEPGMPLYHRDYCNEEIMRKNVYHKQRCVTEHYFLLMQYDELEKICYNRFVPCKNGVRKCNRSKGLVEGVYCNLTEAFKIPRCKYKSFYRRGYVLITCAWQNEIHKLIPHTINDLVEPPKHRSFLNEDGVFVILP.

The N-terminal stretch at 1-26 is a signal peptide; it reads MMRTLITTHPLLLLLLLQQLLQPVQF. Disulfide bonds link cysteine 97–cysteine 152, cysteine 115–cysteine 167, and cysteine 122–cysteine 129. N-linked (GlcNAc...) asparagine glycans are attached at residues asparagine 130 and asparagine 142.

It belongs to the pancreatic ribonuclease family.

The protein localises to the secreted. Its function is as follows. Does not exhibit any ribonuclease activity. This is Inactive ribonuclease-like protein 9 (RNASE9) from Macaca mulatta (Rhesus macaque).